A 166-amino-acid polypeptide reads, in one-letter code: Protein adg1 (166 aa).

A signal peptide spans 1-22 (MFLRSIFQTLCAVSFLAGSVFA).

It localises to the endoplasmic reticulum. This Schizosaccharomyces pombe (strain 972 / ATCC 24843) (Fission yeast) protein is Protein adg1 (adg1).